The following is a 272-amino-acid chain: Phosphonates import ATP-binding protein PhnC 1 (272 aa).

The region spanning 2–246 (LRIQALTKTY…VLTSIYGEED (245 aa)) is the ABC transporter domain. ATP is bound at residue 35-42 (GPSGAGKS).

This sequence belongs to the ABC transporter superfamily. Phosphonates importer (TC 3.A.1.9.1) family. The complex is composed of two ATP-binding proteins (PhnC), two transmembrane proteins (PhnE) and a solute-binding protein (PhnD).

It is found in the cell inner membrane. It catalyses the reaction phosphonate(out) + ATP + H2O = phosphonate(in) + ADP + phosphate + H(+). Part of the ABC transporter complex PhnCDE involved in phosphonates import. Responsible for energy coupling to the transport system. This chain is Phosphonates import ATP-binding protein PhnC 1, found in Rhodopseudomonas palustris (strain BisB18).